A 280-amino-acid polypeptide reads, in one-letter code: UBX domain-containing protein 10 (280 aa).

A disordered region spans residues 41 to 94 (SAKGRTRPSLQKSQGVEVCAHHIPSPPPAIPYELPSSQKPGACAPKSPNQGASD). Serine 87 carries the phosphoserine modification. A UBX domain is found at 194 to 271 (DQEPRLLLAV…RIPHKSVLGI (78 aa)).

It belongs to the UBXN10 family. In terms of assembly, interacts with CLUAP1; the interaction is direct and mediates interaction with the intraflagellar transport complex B (IFT-B). Interacts with VCP; the interaction is direct.

The protein localises to the cell projection. It is found in the cilium. VCP/p97-binding protein required for ciliogenesis. Acts as a tethering factor that facilitates recruitment of VCP/p97 to the intraflagellar transport complex B (IFT-B) in cilia. UBX domain-containing proteins act as tethering factors for VCP/p97 and may specify substrate specificity of VCP/p97. The chain is UBX domain-containing protein 10 from Homo sapiens (Human).